A 520-amino-acid polypeptide reads, in one-letter code: UBX domain-containing protein 11 (520 aa).

The segment at 1–26 (MSSPLASLSKTRKVPLPSEPMNPGRR) is disordered. Residues 76–149 (MAFMTRKLWD…VREMERFLSD (74 aa)) adopt a coiled-coil conformation. The region spanning 230–294 (LEPIPLKLYR…VSDLRNQVYL (65 aa)) is the SEP domain. One can recognise a UBX domain in the interval 392–469 (PAPPLSMLRI…GLVPKAALLL (78 aa)). The tract at residues 476-520 (KSSLKFSPGPCPGPGPGPSPGPGPGPSPGPGPGPSPCPGPSPSPQ) is disordered. The span at 484 to 520 (GPCPGPGPGPSPGPGPGPSPGPGPGPSPCPGPSPSPQ) shows a compositional bias: pro residues. A run of 3 repeats spans residues 487 to 494 (PGPGPGPS), 495 to 502 (PGPGPGPS), and 503 to 510 (PGPGPGPS). The tract at residues 487 to 510 (PGPGPGPSPGPGPGPSPGPGPGPS) is 3 X 8 AA tandem repeats of P-G-P-G-P-G-P-S.

As to quaternary structure, interacts with GNA12, GNA13, RND1, RND2 and RND3.

The protein localises to the cytoplasm. It is found in the cytoskeleton. May be involved in the reorganization of actin cytoskeleton mediated by RND1, RND2 and RND3. Promotes RHOA activation mediated by GNA12 and GNA13. In Homo sapiens (Human), this protein is UBX domain-containing protein 11 (UBXN11).